The following is a 355-amino-acid chain: 6-aminohexanoate-oligomer endohydrolase (355 aa).

Thr-267 acts as the Nucleophile in catalysis.

It belongs to the peptidase S58 family. In terms of assembly, heterotetramer composed of 4 alpha/beta heterodimers. Exists at the monomer/dimer/trimer equilibrium in aqueous solution. Expressed as an inactive precursor that is cleaved autocatalytically at Asn266/Thr267 to generate an active enzyme composed of an alpha subunit and a beta subunit.

The enzyme catalyses [N-(6-aminohexanoyl)]n + H2O = [N-(6-aminohexanoyl)]n-x + [N-(6-aminohexanoyl)]x.. It participates in xenobiotic degradation; nylon-6 oligomer degradation. Its function is as follows. Involved in the degradation of nylon-6 oligomers. Degrades cyclic and linear oligomers of 6-aminohexanoate (Ahx) with a degree of polymerization greater than three by an endo-type mode. Cannot use Ahx cyclic dimer or the Ahx linear dimer. This chain is 6-aminohexanoate-oligomer endohydrolase, found in Paenarthrobacter ureafaciens.